The following is a 424-amino-acid chain: Tyrosine--tRNA ligase (424 aa).

Residue Tyr-37 coordinates L-tyrosine. The short motif at Pro-42–Ser-51 is the 'HIGH' region element. The L-tyrosine site is built by Tyr-174 and Gln-178. Residues Lys-234–Thr-238 carry the 'KMSKS' region motif. Lys-237 contributes to the ATP binding site. The S4 RNA-binding domain maps to Ser-357 to Asp-422.

This sequence belongs to the class-I aminoacyl-tRNA synthetase family. TyrS type 1 subfamily. Homodimer.

The protein localises to the cytoplasm. It carries out the reaction tRNA(Tyr) + L-tyrosine + ATP = L-tyrosyl-tRNA(Tyr) + AMP + diphosphate + H(+). Catalyzes the attachment of tyrosine to tRNA(Tyr) in a two-step reaction: tyrosine is first activated by ATP to form Tyr-AMP and then transferred to the acceptor end of tRNA(Tyr). This chain is Tyrosine--tRNA ligase, found in Chromobacterium violaceum (strain ATCC 12472 / DSM 30191 / JCM 1249 / CCUG 213 / NBRC 12614 / NCIMB 9131 / NCTC 9757 / MK).